The primary structure comprises 138 residues: Gap junction alpha-4 protein (138 aa).

At 1-16 the chain is on the cytoplasmic side; it reads DWGFLEKLLDQVQEHS. A helical membrane pass occupies residues 17–39; that stretch reads TVVGKIWLTVLFIFRILILGLAG. The Extracellular portion of the chain corresponds to 40-74; sequence ESVWGDEQSDFECNTAQPGCTNVCYDQAFPISHIP. The helical transmembrane segment at 75-97 threads the bilayer; it reads YWVLQFLFVSTPTLVYLGHVIYL. The Cytoplasmic segment spans residues 98-138; it reads SRREERLRQKEGELRALPDKDPRVERALAGIERQMAKISVA.

This sequence belongs to the connexin family. Alpha-type (group II) subfamily. As to quaternary structure, a connexon is composed of a hexamer of connexins.

The protein resides in the cell membrane. It is found in the cell junction. The protein localises to the gap junction. One gap junction consists of a cluster of closely packed pairs of transmembrane channels, the connexons, through which materials of low MW diffuse from one cell to a neighboring cell. This is Gap junction alpha-4 protein (GJA4) from Sus scrofa (Pig).